A 141-amino-acid chain; its full sequence is Brain ribonuclease (141 aa).

The segment at 1 to 25 (KETAAAKFRRQHMDSGSSSSSNSNY) is disordered. Substrate is bound by residues K7 and R10. The active-site Proton acceptor is the H12. A compositionally biased stretch (low complexity) spans 15–24 (SGSSSSSNSN). Cystine bridges form between C26/C84, C40/C95, C58/C110, and C65/C72. 41 to 45 (KPVNT) is a substrate binding site. N62 is a glycosylation site (N-linked (GlcNAc...) asparagine). Substrate-binding residues include K66 and R85. H119 acts as the Proton donor in catalysis. O-linked (GalNAc...) threonine glycosylation is present at T129.

Belongs to the pancreatic ribonuclease family.

Its subcellular location is the secreted. The sequence is that of Brain ribonuclease (BRN) from Giraffa camelopardalis (Giraffe).